Here is a 151-residue protein sequence, read N- to C-terminus: Group 10 secretory phospholipase A2 (151 aa).

Positions 1–17 are cleaved as a signal peptide; it reads MLLLLLLLLLGPGPGFS. Positions 18 to 28 are excised as a propeptide; it reads EATRRSHVYKR. Intrachain disulfides connect cysteine 39/cysteine 97, cysteine 53/cysteine 143, cysteine 55/cysteine 71, cysteine 70/cysteine 125, cysteine 76/cysteine 150, cysteine 77/cysteine 118, cysteine 86/cysteine 111, and cysteine 104/cysteine 116. Residues tyrosine 54, glycine 56, and glycine 58 each coordinate Ca(2+). Histidine 74 is a catalytic residue. Aspartate 75 is a binding site for Ca(2+). Aspartate 119 is a catalytic residue.

The protein belongs to the phospholipase A2 family. In terms of assembly, interacts with PLA2R1; this interaction mediates PLA2G10 clearance and inactivation. Ca(2+) is required as a cofactor. As to expression, expressed at high levels in testis and the gastrointestinal tract including stomach and colon. Expressed at lower levels in other tissues including small intestine, uterus, oviduct, lung, thymus, spleen and brain. Expressed in Paneth-like secretory epithelial cells of the colon. Expressed in gastric and ileac epithelial cells and in glandular epithelium of intestinal mucosa (at protein level). Expressed in late spermatogenic cells, spermatocytes and spermatids, but not spermatogonia in seminiferous tubules (at protein level). Expressed mainly in the apical side of endometrial epithelial cells and in the interstitium beneath the epithelium of uterus (at protein level). Expressed in resident spleen macrophages (at protein level). Expressed at outermost layer of hair follicles. Expressed in dorsal root ganglia in both NEFH-positive A-fibers and PRPH-positive C-fibers (at protein level).

It localises to the secreted. Its subcellular location is the lysosome. The protein resides in the cytoplasmic vesicle. The protein localises to the secretory vesicle. It is found in the acrosome. The enzyme catalyses a 1,2-diacyl-sn-glycero-3-phosphocholine + H2O = a 1-acyl-sn-glycero-3-phosphocholine + a fatty acid + H(+). The catalysed reaction is 1-hexadecanoyl-2-(9Z-octadecenoyl)-sn-glycero-3-phosphocholine + H2O = 1-hexadecanoyl-sn-glycero-3-phosphocholine + (9Z)-octadecenoate + H(+). It carries out the reaction 1-octadecanoyl-2-(5Z,8Z,11Z,14Z-eicosatetraenoyl)-sn-glycero-3-phosphocholine + H2O = 1-octadecanoyl-sn-glycero-3-phosphocholine + (5Z,8Z,11Z,14Z)-eicosatetraenoate + H(+). It catalyses the reaction 1,2-dihexadecanoyl-sn-glycero-3-phosphocholine + H2O = 1-hexadecanoyl-sn-glycero-3-phosphocholine + hexadecanoate + H(+). The enzyme catalyses 1-hexadecanoyl-2-(9Z-octadecenoyl)-sn-glycero-3-phosphoglycerol + H2O = 1-hexadecanoyl-sn-glycero-3-phosphoglycerol + (9Z)-octadecenoate + H(+). The catalysed reaction is 1,2-dihexadecanoyl-sn-glycero-3-phospho-(1'-sn-glycerol) + H2O = 1-hexadecanoyl-sn-glycero-3-phospho-(1'-sn-glycerol) + hexadecanoate + H(+). It carries out the reaction 1-hexadecanoyl-2-(9Z-octadecenoyl)-sn-glycero-3-phospho-L-serine + H2O = 1-hexadecanoyl-sn-glycero-3-phospho-L-serine + (9Z)-octadecenoate + H(+). It catalyses the reaction 1-hexadecanoyl-2-(9Z,12Z-octadecadienoyl)-sn-glycero-3-phosphoethanolamine + H2O = 1-hexadecanoyl-sn-glycero-3-phosphoethanolamine + (9Z,12Z)-octadecadienoate + H(+). The enzyme catalyses 1-hexadecanoyl-2-(9Z-octadecenoyl)-sn-glycero-3-phosphate + H2O = 1-hexadecanoyl-sn-glycero-3-phosphate + (9Z)-octadecenoate + H(+). The catalysed reaction is 1-O-hexadecyl-2-acetyl-sn-glycero-3-phosphocholine + H2O = 1-O-hexadecyl-sn-glycero-3-phosphocholine + acetate + H(+). Its function is as follows. Secretory calcium-dependent phospholipase A2 that primarily targets extracellular phospholipids. Hydrolyzes the ester bond of the fatty acyl group attached at sn-2 position of phospholipids with preference for phosphatidylcholines and phosphatidylglycerols over phosphatidylethanolamines. Preferentially releases sn-2 omega-6 and omega-3 polyunsaturated fatty acyl (PUFA) chains over saturated fatty acyls. Contributes to phospholipid remodeling of very low-density lipoprotein (VLDL), low-density lipoprotein (LDL) and high-density lipoprotein (HDL) particles. Hydrolyzes LDL phospholipids releasing unsaturated fatty acids that regulate macrophage differentiation toward foam cells. Efficiently hydrolyzes and inactivates PAF, a potent lipid mediator present in oxidized LDL. May act in an autocrine and paracrine manner. Secreted by lung epithelium, targets membrane phospholipids of infiltrating eosinophils, releasing arachidonate and boosting eicosanoid and cysteinyl leukotriene synthesis involved in airway inflammatory response. Secreted by gut epithelium, hydrolyzes dietary and biliary phosphatidylcholines in the gastrointestinal lumen, thereby regulating adipogenesis and body weight. Plays a stem cell regulator role in colon epithelium. Within intracellular compartment, mediates Paneth-like cell differentiation and its stem cell supporting functions by inhibiting Wnt signaling pathway in intestinal stem cell (ISC). Secreted in the intestinal lumen upon inflammation, acts in an autocrine way and promotes prostaglandin E2 synthesis that stimulates the Wnt signaling pathway in ISCs and tissue regeneration. May participate in hair follicle morphogenesis by regulating phosphatidylethanolamines metabolism at the outermost epithelial layer and facilitating melanin synthesis. By generating lysophosphatidylcholines (LPCs) at sperm acrosome controls sperm cell capacitation, acrosome reaction and overall fertility. May promote neurite outgrowth in neuron fibers involved in nociception. Contributes to lipid remodeling of cellular membranes and generation of lipid mediators involved in pathogen clearance. Cleaves sn-2 fatty acyl chains of phosphatidylglycerols and phosphatidylethanolamines, which are major components of membrane phospholipids in bacteria. Displays bactericidal activity against Gram-positive bacteria by directly hydrolyzing phospholipids of the bacterial membrane. In pulmonary epithelium, may contribute to host defense response against adenoviral infection. Prevents adenovirus entry into host cells by hydrolyzing host cell plasma membrane, releasing C16:0 LPCs that inhibit virus-mediated membrane fusion and viral infection. Likely prevents adenoviral entry into the endosomes of host cells. May play a role in maturation and activation of innate immune cells including macrophages, group 2 innate lymphoid cells and mast cells. This Mus musculus (Mouse) protein is Group 10 secretory phospholipase A2 (Pla2g10).